Here is a 688-residue protein sequence, read N- to C-terminus: Glycine--tRNA ligase beta subunit (688 aa).

The protein belongs to the class-II aminoacyl-tRNA synthetase family. As to quaternary structure, tetramer of two alpha and two beta subunits.

The protein resides in the cytoplasm. The catalysed reaction is tRNA(Gly) + glycine + ATP = glycyl-tRNA(Gly) + AMP + diphosphate. This Listeria welshimeri serovar 6b (strain ATCC 35897 / DSM 20650 / CCUG 15529 / CIP 8149 / NCTC 11857 / SLCC 5334 / V8) protein is Glycine--tRNA ligase beta subunit.